The chain runs to 185 residues: MIVLGIDPGSRRCGYGVVAREGARLTVVESGVLVPGDLPMAQRLGRILDGLDALIARARPLEASVESVFSGASPRSALVLGQARGVALAAAARAGLPVFEYAPSEVKLAFTGNGRAGKDQMLRTARMLLGAAPGLSDEADALAIAVCHLARRAFAVPAAGAGRAAAARAAAARLRPSRRDHRGTP.

Catalysis depends on residues Asp-7, Glu-66, and Asp-137. Positions 7, 66, and 137 each coordinate Mg(2+).

The protein belongs to the RuvC family. As to quaternary structure, homodimer which binds Holliday junction (HJ) DNA. The HJ becomes 2-fold symmetrical on binding to RuvC with unstacked arms; it has a different conformation from HJ DNA in complex with RuvA. In the full resolvosome a probable DNA-RuvA(4)-RuvB(12)-RuvC(2) complex forms which resolves the HJ. The cofactor is Mg(2+).

The protein resides in the cytoplasm. It carries out the reaction Endonucleolytic cleavage at a junction such as a reciprocal single-stranded crossover between two homologous DNA duplexes (Holliday junction).. Functionally, the RuvA-RuvB-RuvC complex processes Holliday junction (HJ) DNA during genetic recombination and DNA repair. Endonuclease that resolves HJ intermediates. Cleaves cruciform DNA by making single-stranded nicks across the HJ at symmetrical positions within the homologous arms, yielding a 5'-phosphate and a 3'-hydroxyl group; requires a central core of homology in the junction. The consensus cleavage sequence is 5'-(A/T)TT(C/G)-3'. Cleavage occurs on the 3'-side of the TT dinucleotide at the point of strand exchange. HJ branch migration catalyzed by RuvA-RuvB allows RuvC to scan DNA until it finds its consensus sequence, where it cleaves and resolves the cruciform DNA. The protein is Crossover junction endodeoxyribonuclease RuvC of Anaeromyxobacter dehalogenans (strain 2CP-1 / ATCC BAA-258).